Consider the following 248-residue polypeptide: Ubiquinone/menaquinone biosynthesis C-methyltransferase UbiE (248 aa).

Residues S68 and D92 each contribute to the S-adenosyl-L-methionine site.

It belongs to the class I-like SAM-binding methyltransferase superfamily. MenG/UbiE family.

It carries out the reaction a 2-demethylmenaquinol + S-adenosyl-L-methionine = a menaquinol + S-adenosyl-L-homocysteine + H(+). The enzyme catalyses a 2-methoxy-6-(all-trans-polyprenyl)benzene-1,4-diol + S-adenosyl-L-methionine = a 5-methoxy-2-methyl-3-(all-trans-polyprenyl)benzene-1,4-diol + S-adenosyl-L-homocysteine + H(+). Its pathway is quinol/quinone metabolism; menaquinone biosynthesis; menaquinol from 1,4-dihydroxy-2-naphthoate: step 2/2. It functions in the pathway cofactor biosynthesis; ubiquinone biosynthesis. Its function is as follows. Methyltransferase required for the conversion of demethylmenaquinol (DMKH2) to menaquinol (MKH2) and the conversion of 2-polyprenyl-6-methoxy-1,4-benzoquinol (DDMQH2) to 2-polyprenyl-3-methyl-6-methoxy-1,4-benzoquinol (DMQH2). The polypeptide is Ubiquinone/menaquinone biosynthesis C-methyltransferase UbiE (Rickettsia conorii (strain ATCC VR-613 / Malish 7)).